Reading from the N-terminus, the 66-residue chain is Large ribosomal subunit protein bL31 (66 aa).

C16, C18, C36, and C39 together coordinate Zn(2+).

It belongs to the bacterial ribosomal protein bL31 family. Type A subfamily. Part of the 50S ribosomal subunit. The cofactor is Zn(2+).

In terms of biological role, binds the 23S rRNA. This is Large ribosomal subunit protein bL31 from Campylobacter fetus subsp. fetus (strain 82-40).